The primary structure comprises 435 residues: ATP-dependent protease ATPase subunit HslU (435 aa).

Residues isoleucine 18, 60-65 (GVGKTE), aspartate 248, glutamate 313, and arginine 385 each bind ATP.

Belongs to the ClpX chaperone family. HslU subfamily. As to quaternary structure, a double ring-shaped homohexamer of HslV is capped on each side by a ring-shaped HslU homohexamer. The assembly of the HslU/HslV complex is dependent on binding of ATP.

The protein resides in the cytoplasm. In terms of biological role, ATPase subunit of a proteasome-like degradation complex; this subunit has chaperone activity. The binding of ATP and its subsequent hydrolysis by HslU are essential for unfolding of protein substrates subsequently hydrolyzed by HslV. HslU recognizes the N-terminal part of its protein substrates and unfolds these before they are guided to HslV for hydrolysis. The polypeptide is ATP-dependent protease ATPase subunit HslU (Sinorhizobium medicae (strain WSM419) (Ensifer medicae)).